We begin with the raw amino-acid sequence, 443 residues long: Cell division protein FtsA (443 aa).

It belongs to the FtsA/MreB family. Self-interacts. Interacts with FtsZ.

The protein resides in the cell inner membrane. In terms of biological role, cell division protein that is involved in the assembly of the Z ring. May serve as a membrane anchor for the Z ring. The polypeptide is Cell division protein FtsA (Agrobacterium fabrum (strain C58 / ATCC 33970) (Agrobacterium tumefaciens (strain C58))).